A 618-amino-acid polypeptide reads, in one-letter code: Serine--tRNA ligase, cytoplasmic (618 aa).

417-419 contributes to the L-serine binding site; it reads TSE. An ATP-binding site is contributed by 448–450; it reads RTE. Position 472 (E472) interacts with L-serine. 536–539 is an ATP binding site; the sequence is EVSS. S570 lines the L-serine pocket.

Belongs to the class-II aminoacyl-tRNA synthetase family. Type-1 seryl-tRNA synthetase subfamily. As to quaternary structure, homodimer. The tRNA molecule binds across the dimer.

It is found in the cytoplasm. It carries out the reaction tRNA(Ser) + L-serine + ATP = L-seryl-tRNA(Ser) + AMP + diphosphate + H(+). It catalyses the reaction tRNA(Sec) + L-serine + ATP = L-seryl-tRNA(Sec) + AMP + diphosphate + H(+). The protein operates within aminoacyl-tRNA biosynthesis; selenocysteinyl-tRNA(Sec) biosynthesis; L-seryl-tRNA(Sec) from L-serine and tRNA(Sec): step 1/1. Catalyzes the attachment of serine to tRNA(Ser). Is also able to aminoacylate tRNA(Sec) with serine, to form the misacylated tRNA L-seryl-tRNA(Sec), which will be further converted into selenocysteinyl-tRNA(Sec). The sequence is that of Serine--tRNA ligase, cytoplasmic from Plasmodium falciparum (isolate 3D7).